Reading from the N-terminus, the 287-residue chain is Genetic interactor of prohibitin 7, mitochondrial (287 aa).

The N-terminal 24 residues, 1–24, are a transit peptide targeting the mitochondrion; it reads MVLSNVKIFRLKSHRAFRIGPMIK. Residues 250–266 form a helical membrane-spanning segment; the sequence is SKAIISFVVFVSIYVWL.

Belongs to the GEP7 family.

Its subcellular location is the mitochondrion membrane. Involved in respiratory growth and required for cell survival in the absence of prohibitins or GEM1. The protein is Genetic interactor of prohibitin 7, mitochondrial (GEP7) of Saccharomyces cerevisiae (strain ATCC 204508 / S288c) (Baker's yeast).